A 625-amino-acid polypeptide reads, in one-letter code: 1,4-alpha-glucan branching enzyme GlgB (625 aa).

Residue Asp302 is the Nucleophile of the active site. Glu355 acts as the Proton donor in catalysis.

The protein belongs to the glycosyl hydrolase 13 family. GlgB subfamily. Monomer.

It carries out the reaction Transfers a segment of a (1-&gt;4)-alpha-D-glucan chain to a primary hydroxy group in a similar glucan chain.. Its pathway is glycan biosynthesis; glycogen biosynthesis. Its function is as follows. Catalyzes the formation of the alpha-1,6-glucosidic linkages in glycogen by scission of a 1,4-alpha-linked oligosaccharide from growing alpha-1,4-glucan chains and the subsequent attachment of the oligosaccharide to the alpha-1,6 position. The polypeptide is 1,4-alpha-glucan branching enzyme GlgB (Albidiferax ferrireducens (strain ATCC BAA-621 / DSM 15236 / T118) (Rhodoferax ferrireducens)).